The following is a 3859-amino-acid chain: MAFVATQGATVVDQTTLMKKYLQFVAALTDVNTPDETKLKMMQEVSENFENVTSSPQYSTFLEHIIPRFLTFLQDGEVQFLQEKPAQQLRKLVLEIIHRIPTNEHLRPHTKNVLSVMFRFLETENEENVLICLRIIIELHKQFRPPITQEIHHFLDFVKQIYKELPKVVNRYFENPQVIPENTVPPPEMVGMITTIAVKVNPEREDSETRTHSIIPRGSLSLKVLAELPIIVVLMYQLYKLNIHNVVAEFVPLIMNTIAIQVSAQARQHKLYNKELYADFIAAQIKTLSFLAYIIRIYQELVTKYSQQMVKGMLQLLSNCPAETAHLRKELLIAAKHILTTELRNQFIPCMDKLFDESILIGSGYTARETLRPLAYSTLADLVHHVRQHLPLSDLSLAVQLFAKNIDDESLPSSIQTMSCKLLLNLVDCIRSKSEQESGNGRDVLMRMLEVFVLKFHTIARYQLSAIFKKCKPQSELGAVEAALPGVPTAPAAPGPAPSPAPVPAPPPPPPPPPPATPVTPAPVPPFEKQGEKDKEDKQTFQVTDCRSLVKTLVCGVKTITWGITSCKAPGEAQFIPNKQLQPKETQIYIKLVKYAMQALDIYQVQIAGNGQTYIRVANCQTVRMKEEKEVLEHFAGVFTMMNPLTFKEIFQTTVPYMVERISKNYALQIVANSFLANPTTSALFATILVEYLLDRLPEMGSNVELSNLYLKLFKLVFGSVSLFAAENEQMLKPHLHKIVNSSMELAQTAKEPYNYFLLLRALFRSIGGGSHDLLYQEFLPLLPNLLQGLNMLQSGLHKQHMKDLFVELCLTVPVRLSSLLPYLPMLMDPLVSALNGSQTLVSQGLRTLELCVDNLQPDFLYDHIQPVRAELMQALWRTLRNPADSISHVAYRVLGKFGGSNRKMLKESQKLHYVVTEVQGPSITVEFSDCKASLQLPMEKAIETALDCLKSANTEPYYRRQAWEVIKCFLVAMMSLEDNKHALYQLLAHPNFTEKTIPNVIISHRYKAQDTPARKTFEQALTGAFMSAVIKDLRPSALPFVASLIRHYTMVAVAQQCGPFLLPCYQVGSQPSTAMFHSEENGSKGMDPLVLIDAIAICMAYEEKELCKIGEVALAVIFDVASIILGSKERACQLPLFSYIVERLCACCYEQAWYAKLGGVVSIKFLMERLPLTWVLQNQQTFLKALLFVMMDLTGEVSNGAVAMAKTTLEQLLMRCATPLKDEERAEEIVAAQEKSFHHVTHDLVREVTSPNSTVRKQAMHSLQVLAQVTGKSVTVIMEPHKEVLQDMVPPKKHLLRHQPANAQIGLMEGNTFCTTLQPRLFTMDLNVVEHKVFYTELLNLCEAEDSALTKLPCYKSLPSLVPLRIAALNALAACNYLPQSREKIIAALFKALNSTNSELQEAGEACMRKFLEGATIEVDQIHTHMRPLLMMLGDYRSLTLNVVNRLTSVTRLFPNSFNDKFCDQMMQHLRKWMEVVVITHKGGQRSDGNESISECGRCPLSPFCQFEEMKICSAIINLFHLIPAAPQTLVKPLLEVVMKTERAMLIEAGSPFREPLIKFLTRHPSQTVELFMMEATLNDPQWSRMFMSFLKHKDARPLRDVLAANPNRFITLLLPGGAQTAVRPGSPSTSTMRLDLQFQAIKIISIIVKNDDSWLASQHSLVSQLRRVWVSENFQERHRKENMAATNWKEPKLLAYCLLNYCKRNYGDIELLFQLLRAFTGRFLCNMTFLKEYMEEEIPKNYSIAQKRALFFRFVDFNDPNFGDELKAKVLQHILNPAFLYSFEKGEGEQLLGPPNPEGDNPESITSVFITKVLDPEKQADMLDSLRIYLLQYATLLVEHAPHHIHDNNKNRNSKLRRLMTFAWPCLLSKACVDPACKYSGHLLLAHIIAKFAIHKKIVLQVFHSLLKAHAMEARAIVRQAMAILTPAVPARMEDGHQMLTHWTRKIIVEEGHTVPQLVHILHLIVQHFKVYYPVRHHLVQHMVSAMQRLGFTPSVTIEQRRLAVDLSEVVIKWELQRIKDQQPDSDMDPNSSGEGVNSVSSSIKRGLSVDSAQEVKRFRTATGAISAVFGRSQSLPGADSLLAKPIDKQHTDTVVNFLIRVACQVNDNTNTAGSPGEVLSRRCVNLLKTALRPDMWPKSELKLQWFDKLLMTVEQPNQVNYGNICTGLEVLSFLLTVLQSPAILSSFKPLQRGIAACMTCGNTKVLRAVHSLLSRLMSIFPTEPSTSSVASKYEELECLYAAVGKVIYEGLTNYEKATNANPSQLFGTLMILKSACSNNPSYIDRLISVFMRSLQKMVREHLNPQAASGSTEATSGTSELVMLSLELVKTRLAVMSMEMRKNFIQAILTSLIEKSPDAKILRAVVKIVEEWVKNNSPMAANQTPTLREKSILLVKMMTYIEKRFPEDLELNAQFLDLVNYVYRDETLSGSELTAKLEPAFLSGLRCAQPLIRAKFFEVFDNSMKRRVYERLLYVTCSQNWEAMGNHFWIKQCIELLLAVCEKSTPIGTSCQGAMLPSITNVINLADSHDRAAFAMVTHVKQEPRERENSESKEEDVEIDIELAPGDQTSTPKTKELSEKDIGNQLHMLTNRHDKFLDTLREVKTGALLSAFVQLCHISTTLAEKTWVQLFPRLWKILSDRQQHALAGEISPFLCSGSHQVQRDCQPSALNCFVEAMSQCVPPIPIRPCVLKYLGKTHNLWFRSTLMLEHQAFEKGLSLQIKPKQTTEFYEQESITPPQQEILDSLAELYSLLQEEDMWAGLWQKRCKYSETATAIAYEQHGFFEQAQESYEKAMDKAKKEHERSNASPAIFPEYQLWEDHWIRCSKELNQWEALTEYGQSKGHINPYLVLECAWRVSNWTAMKEALVQVEVSCPKEMAWKVNMYRGYLAICHPEEQQLSFIERLVEMASSLAIREWRRLPHVVSHVHTPLLQAAQQIIELQEAAQINAGLQPTNLGRNNSLHDMKTVVKTWRNRLPIVSDDLSHWSSIFMWRQHHYQGKPTWSGMHSSSIVTAYENSSQHDPSSNNAMLGVHASASAIIQYGKIARKQGLVNVALDILSRIHTIPTVPIVDCFQKIRQQVKCYLQLAGVMGKNECMQGLEVIESTNLKYFTKEMTAEFYALKGMFLAQINKSEEANKAFSAAVQMHDVLVKAWAMWGDYLENIFVKERQLHLGVSAITCYLHACRHQNESKSRKYLAKVLWLLSFDDDKNTLADAVDKYCIGVPPIQWLAWIPQLLTCLVGSEGKLLLNLISQVGRVYPQAVYFPIRTLYLTLKIEQRERYKSDPGPIRATAPMWRCSRIMHMQRELHPTLLSSLEGIVDQMVWFRENWHEEVLRQLQQGLAKCYSVAFEKSGAVSDAKITPHTLNFVKKLVSTFGVGLENVSNVSTMFSSAASESLARRAQATAQDPVFQKLKGQFTTDFDFSVPGSMKLHNLISKLKKWIKILEAKTKQLPKFFLIEEKCRFLSNFSAQTAEVEIPGEFLMPKPTHYYIKIARFMPRVEIVQKHNTAARRLYIRGHNGKIYPYLVMNDACLTESRREERVLQLLRLLNPCLEKRKETTKRHLFFTVPRVVAVSPQMRLVEDNPSSLSLVEIYKQRCAKKGIEHDNPISRYYDRLATVQARGTQASHQVLRDILKEVQSNMVPRSMLKEWALHTFPNATDYWTFRKMFTIQLALIGFAEFVLHLNRLNPEMLQIAQDTGKLNVAYFRFDINDATGDLDANRPVPFRLTPNISEFLTTIGVSGPLTASMIAVARCFAQPNFKVDGILKTVLRDEIIAWHKKTQEDTSSPLSAAGQPENMDSQQLVSLVQKAVTAIMTRLHNLAQFEGGESKVNTLVAAANSLDNLCRMDPAWHPWL.

At A2 the chain carries N-acetylalanine. The segment covering 491–526 (PAAPGPAPSPAPVPAPPPPPPPPPPATPVTPAPVPP) has biased composition (pro residues). The interval 491–541 (PAAPGPAPSPAPVPAPPPPPPPPPPATPVTPAPVPPFEKQGEKDKEDKQTF) is disordered. Basic and acidic residues predominate over residues 529–539 (KQGEKDKEDKQ). S1628 bears the Phosphoserine mark. The tract at residues 2010–2388 (SEVVIKWELQ…SPMAANQTPT (379 aa)) is interaction with TP53. Residues 2023-2044 (DQQPDSDMDPNSSGEGVNSVSS) form a disordered region. Over residues 2033-2044 (NSSGEGVNSVSS) the composition is skewed to low complexity. A Bipartite nuclear localization signal motif is present at residues 2047–2062 (KRGLSVDSAQEVKRFR). Phosphoserine occurs at positions 2051 and 2077. K2543 participates in a covalent cross-link: Glycyl lysine isopeptide (Lys-Gly) (interchain with G-Cter in SUMO2). A compositionally biased stretch (basic and acidic residues) spans 2543–2554 (KQEPRERENSES). Residues 2543 to 2578 (KQEPRERENSESKEEDVEIDIELAPGDQTSTPKTKE) form a disordered region. In terms of domain architecture, FAT spans 2692–3275 (VLKYLGKTHN…YFPIRTLYLT (584 aa)). K3078 is subject to N6-acetyllysine. The 324-residue stretch at 3500–3823 (MPRVEIVQKH…AVTAIMTRLH (324 aa)) folds into the PI3K/PI4K catalytic domain. Residues 3506-3512 (VQKHNTA) are G-loop. Positions 3687–3695 (HLNRLNPEM) are catalytic loop. The segment at 3707–3732 (VAYFRFDINDATGDLDANRPVPFRLT) is activation loop. The region spanning 3827–3859 (QFEGGESKVNTLVAAANSLDNLCRMDPAWHPWL) is the FATC domain.

The protein belongs to the PI3/PI4-kinase family. TRA1 subfamily. In terms of assembly, interacts with MYC, E2F1 and E2F4 transcription factors. Interacts directly with p53/TP53. Interacts with GCN5L2. Component of various HAT complexes. Component of the PCAF complex, at least composed of TADA2L/ADA2, SUPT3H, TADA3L/ADA3, TAF5L/PAF65-beta, TAF6L/PAF65-alpha, TAF10/TAFII30, TAF12/TAFII20, TAF9/TAFII31 and TRRAP. Component of the TFTC-HAT complex, at least composed of TAF5L, TAF6L, TADA3L, SUPT3H/SPT3, TAF2/TAFII150, TAF4/TAFII135, TAF5/TAFII100, GCN5L2/GCN5, TAF10 and TRRAP. Component of the NuA4 histone acetyltransferase complex which contains the catalytic subunit KAT5/TIP60 and the subunits EP400, TRRAP/PAF400, BRD8/SMAP, EPC1, DMAP1/DNMAP1, RUVBL1/TIP49, RUVBL2, ING3, actin, ACTL6A/BAF53A, MORF4L1/MRG15, MORF4L2/MRGX, MRGBP, YEATS4/GAS41, VPS72/YL1 and MEAF6. Component of the STAGA complex, at least composed of SUPT3H, GCN5L2, SUPT7L, TAF5L, TAF6L, TADA3L, TAD1L, TAF10, TAF12, TRRAP and TAF9. The STAGA core complex is associated with a subcomplex required for histone deubiquitination composed of ATXN7L3, ENY2 and USP22. Component of the BAF53 complex, at least composed of BAF53A, RUVBL1, SMARCA4/BRG1, and TRRAP, which preferentially acetylates histone H4 (and H2A) within nucleosomes. Interacts with NPAT. Interaction with TELO2 and TTI1. Component of a SWR1-like complex.

The protein resides in the nucleus. Its function is as follows. Adapter protein, which is found in various multiprotein chromatin complexes with histone acetyltransferase activity (HAT), which gives a specific tag for epigenetic transcription activation. Component of the NuA4 histone acetyltransferase complex which is responsible for acetylation of nucleosomal histones H4 and H2A. Plays a central role in MYC transcription activation, and also participates in cell transformation by MYC. Required for p53/TP53-, E2F1- and E2F4-mediated transcription activation. Also involved in transcription activation mediated by the adenovirus E1A, a viral oncoprotein that deregulates transcription of key genes. Probably acts by linking transcription factors such as E1A, MYC or E2F1 to HAT complexes such as STAGA thereby allowing transcription activation. Probably not required in the steps following histone acetylation in processes of transcription activation. May be required for the mitotic checkpoint and normal cell cycle progression. Component of a SWR1-like complex that specifically mediates the removal of histone H2A.Z/H2AZ1 from the nucleosome. May play a role in the formation and maintenance of the auditory system. This Homo sapiens (Human) protein is Transformation/transcription domain-associated protein (TRRAP).